A 456-amino-acid chain; its full sequence is GPI-anchored protein 13 (456 aa).

Residues 1-23 form the signal peptide; the sequence is MRSPSLAVAATTVLGLFSSSALA. An N-linked (GlcNAc...) asparagine glycan is attached at asparagine 27. Glycine 433 carries GPI-anchor amidated glycine lipidation. The propeptide at 434 to 456 is removed in mature form; sequence AAAVNVVPTTAFGLFAIILASIF.

In terms of processing, the GPI-anchor is attached to the protein in the endoplasmic reticulum and serves to target the protein to the cell surface. There, the glucosamine-inositol phospholipid moiety is cleaved off and the GPI-modified mannoprotein is covalently attached via its lipidless GPI glycan remnant to the 1,6-beta-glucan of the outer cell wall layer.

It localises to the secreted. The protein localises to the cell wall. It is found in the membrane. Its function is as follows. Cell wall protein which contributes to cell wall synthesis and is important for acquiring normal surface properties. Required for virulence in a mouse infection model. This chain is GPI-anchored protein 13 (PGA13), found in Candida albicans (strain SC5314 / ATCC MYA-2876) (Yeast).